A 38-amino-acid polypeptide reads, in one-letter code: Defensin D7 (38 aa).

It belongs to the DEFL family. Group IV subfamily. Distributed in the epidermal cell layer of leaves and in the subepidermal layer region of stems. Not in roots.

Its subcellular location is the secreted. The protein localises to the cell wall. Its function is as follows. Antimicrobial peptide. Active against Fusarium spp., Gram-positive and Gram-negative bacterial pathogens. This is Defensin D7 from Spinacia oleracea (Spinach).